Here is a 309-residue protein sequence, read N- to C-terminus: Probable lipid kinase YegS-like (309 aa).

Residues 1–134 (MAPSHWRLIL…VDLLRIDAEH (134 aa)) form the DAGKc domain. Residues T39, 65–71 (GDGTLSE), and T96 contribute to the ATP site. Mg(2+)-binding residues include V219, D222, and L224. Residue E280 is the Proton acceptor of the active site.

This sequence belongs to the diacylglycerol/lipid kinase family. YegS lipid kinase subfamily. Mg(2+) serves as cofactor. Ca(2+) is required as a cofactor.

The protein resides in the cytoplasm. Its function is as follows. Probably phosphorylates lipids; the in vivo substrate is unknown. In Xanthomonas oryzae pv. oryzae (strain MAFF 311018), this protein is Probable lipid kinase YegS-like.